A 406-amino-acid polypeptide reads, in one-letter code: 1H-pyrrole-2-carbonyl-[peptidyl-carrier protein] brominase (406 aa).

FAD is bound by residues Ala17, Glu36, Arg42, His44, Ile45, Ser48, Arg101, Val124, Asp291, and Val304.

The protein belongs to the flavin-dependent halogenase family.

The enzyme catalyses (1H-pyrrole-2-carbonyl)-[peptidyl-carrier protein] + 3 bromide + 3 FADH2 + 3 O2 = (3,4,5-tribromo-1H-pyrrole-2-carbonyl)-[peptidyl-carrier protein] + 3 FAD + 6 H2O. It carries out the reaction (1H-pyrrole-2-carbonyl)-[peptidyl-carrier protein] + bromide + FADH2 + O2 = (5-bromo-1H-pyrrole-2-carbonyl)-[peptidyl-carrier protein] + FAD + 2 H2O. The catalysed reaction is (5-bromo-1H-pyrrole-2-carbonyl)-[peptidyl-carrier protein] + bromide + FADH2 + O2 = (4,5-dibromo-1H-pyrrole-2-carbonyl)-[peptidyl-carrier protein] + FAD + 2 H2O. It catalyses the reaction (4,5-dibromo-1H-pyrrole-2-carbonyl)-[peptidyl-carrier protein] + bromide + FADH2 + O2 = (3,4,5-tribromo-1H-pyrrole-2-carbonyl)-[peptidyl-carrier protein] + FAD + 2 H2O. Functionally, brominase involved in the biosynthesis of polybrominated aromatic organic compounds. Catalyzes three successive rounds of bromination of pyrrolyl-S-Bmp1 to produce mono-, di- and tribromopyrrolyl-S-Bmp1. In Pseudoalteromonas luteoviolacea (strain 2ta16), this protein is 1H-pyrrole-2-carbonyl-[peptidyl-carrier protein] brominase.